Reading from the N-terminus, the 211-residue chain is Large ribosomal subunit protein uL3 (211 aa).

Residues 125–148 (GPASHGSKKWHRRPGSIGQRKTPG) are disordered.

The protein belongs to the universal ribosomal protein uL3 family. In terms of assembly, part of the 50S ribosomal subunit. Forms a cluster with proteins L14 and L19. Also contacts proteins L13 and L17.

In terms of biological role, one of the primary rRNA binding proteins, it binds directly near the 3'-end of the 23S rRNA, where it nucleates assembly of the 50S subunit. The polypeptide is Large ribosomal subunit protein uL3 (rplC) (Deinococcus radiodurans (strain ATCC 13939 / DSM 20539 / JCM 16871 / CCUG 27074 / LMG 4051 / NBRC 15346 / NCIMB 9279 / VKM B-1422 / R1)).